The primary structure comprises 818 residues: FAD-dependent monooxygenase anuJ (818 aa).

Residues Glu46, Ala60, Arg122, Asp329, and Gly342 each contribute to the FAD site. A run of 3 helical transmembrane segments spans residues 471–491, 539–559, and 571–591; these read VLWALPLLGMAVAGLLTMFSV, FFYQPFSFFADYGVWYGIMLV, and LSFALLWGMLNMWGIAIFVPI. A glycan (N-linked (GlcNAc...) asparagine) is linked at Asn614. Helical transmembrane passes span 621 to 641 and 647 to 667; these read ILPVLLATHYATFMDAYLSPV and AAGFLWELFPVWLSLAQAGLA. Residue Asn683 is glycosylated (N-linked (GlcNAc...) asparagine). 2 consecutive transmembrane segments (helical) span residues 743–763 and 778–798; these read WDQVFFAIPNLFWIILLFADL and FSALGLIIAGGNGTMLGLMWL.

This sequence belongs to the paxM FAD-dependent monooxygenase family.

It is found in the membrane. Functionally, highly reducing polyketide synthase; part of the gene cluster that mediates the biosynthesis of annullatin D, an alkylated aromatic polyketide with a fused dihydrobenzofuran lactone ring system that exhibits potent agonistic activities toward the cannabinoid receptors. AnuJ does not seem to play a role within the pathway. The annullatin backbone 2-hydroxymethyl-3-pentylphenol is assembled from one acetyl-CoA starter unit and 5 malonyl-CoA elongation units by cooperation of the highly reducing polyketide synthase anuA, the short-chain dehydrogenase anuB and the oxidoreductase anuC, before being hydroxylated at the C-5 alkyl chain by the cytochrome P450 monooxygenase anuE to form (8S)-annullatin E. The prenyltransferase anuH subsequently installs one isoprenyl group at the benzene ring to form (8S)-annullatin J. Enzymatic or nonenzymatic dihydro-benzofuran ring formation between the prenyl and the phenolic hydroxyl groups in (8S)-annullatin J results in two diastereomers (2S,9S)-annullatin H and compound 12. The intermediate (2S,9S)-annullatin H is then converted to (2S,9S)-annullatin D by the FAD-linked oxidoreductase anuG-catalyzed five-member lactone ring formation. The isomer 12 acts as a substrate for the short-chain dehydrogenase anuF and is oxidized to (2R)-annullatin F, which is subsequently acetylated by an acetyltransferase leading to (2R)-annullatin G formation. The remaining enzymes identified within the cluster, anuD, anuI and anuJ, seem not to be involved in annullatin biosynthesis. This is FAD-dependent monooxygenase anuJ from Penicillium roqueforti (strain FM164).